The chain runs to 307 residues: NADH-ubiquinone oxidoreductase chain 2 (307 aa).

10 consecutive transmembrane segments (helical) span residues 1-21 (MTLQ…LSMT), 25-45 (WIII…YYML), 58-78 (YFLI…YIFV), 88-108 (FIFI…FWII), 119-139 (IGIV…HMGC), 144-164 (MLNL…LIGM), 193-213 (LFKY…FLYL), 217-237 (MSIS…LFIG), 250-270 (LWFI…VYYL), and 287-307 (HYKM…LFLT).

This sequence belongs to the complex I subunit 2 family.

The protein localises to the mitochondrion inner membrane. It carries out the reaction a ubiquinone + NADH + 5 H(+)(in) = a ubiquinol + NAD(+) + 4 H(+)(out). Its function is as follows. Core subunit of the mitochondrial membrane respiratory chain NADH dehydrogenase (Complex I) that is believed to belong to the minimal assembly required for catalysis. Complex I functions in the transfer of electrons from NADH to the respiratory chain. The immediate electron acceptor for the enzyme is believed to be ubiquinone. In Albinaria caerulea (Land snail), this protein is NADH-ubiquinone oxidoreductase chain 2 (ND2).